Reading from the N-terminus, the 375-residue chain is Probable cytochrome c oxidase subunit 2 (375 aa).

3 helical membrane passes run 36–56 (LAVSLGITAMLVSGCSIDNVW), 80–100 (IIAALAMGVLVWGLTFWTVVF), and 122–142 (LTYTAIPFVIIAVLFYFTVVV). Cu cation-binding residues include His-264, Cys-305, Cys-309, and His-313. Residues 353–363 (VATSTRPFNTD) are compositionally biased toward polar residues. Residues 353–375 (VATSTRPFNTDRTVKSAAAPEAE) are disordered.

This sequence belongs to the cytochrome c oxidase subunit 2 family. Cu cation serves as cofactor. Heme is required as a cofactor.

The protein localises to the cell membrane. It catalyses the reaction 4 Fe(II)-[cytochrome c] + O2 + 8 H(+)(in) = 4 Fe(III)-[cytochrome c] + 2 H2O + 4 H(+)(out). Functionally, subunits I and II form the functional core of the enzyme complex. Electrons originating in cytochrome c are transferred via heme a and Cu(A) to the binuclear center formed by heme a3 and Cu(B). The protein is Probable cytochrome c oxidase subunit 2 (ctaC) of Nocardia farcinica (strain IFM 10152).